The primary structure comprises 700 residues: Elongation factor G (700 aa).

One can recognise a tr-type G domain in the interval 10–286; it reads TKVRNIGIMA…AVVDYLPSPL (277 aa). GTP contacts are provided by residues 19 to 26, 83 to 87, and 137 to 140; these read AHIDAGKT, DTPGH, and NKMD.

It belongs to the TRAFAC class translation factor GTPase superfamily. Classic translation factor GTPase family. EF-G/EF-2 subfamily.

It localises to the cytoplasm. Its function is as follows. Catalyzes the GTP-dependent ribosomal translocation step during translation elongation. During this step, the ribosome changes from the pre-translocational (PRE) to the post-translocational (POST) state as the newly formed A-site-bound peptidyl-tRNA and P-site-bound deacylated tRNA move to the P and E sites, respectively. Catalyzes the coordinated movement of the two tRNA molecules, the mRNA and conformational changes in the ribosome. This chain is Elongation factor G, found in Saccharopolyspora erythraea (strain ATCC 11635 / DSM 40517 / JCM 4748 / NBRC 13426 / NCIMB 8594 / NRRL 2338).